The following is an 87-amino-acid chain: MANTAQARKRARQSVQRNKHNSSLRSMLRTAIKRVRQSIATGDKAAAGETLRKATSVIDSVADKNIIHKNKAARHKSRLAAAVKALA.

Positions 1-25 (MANTAQARKRARQSVQRNKHNSSLR) are disordered. The segment covering 7–22 (ARKRARQSVQRNKHNS) has biased composition (basic residues).

It belongs to the bacterial ribosomal protein bS20 family.

Functionally, binds directly to 16S ribosomal RNA. This Bordetella bronchiseptica (strain ATCC BAA-588 / NCTC 13252 / RB50) (Alcaligenes bronchisepticus) protein is Small ribosomal subunit protein bS20.